The following is a 225-amino-acid chain: NAD(P)H-quinone oxidoreductase subunit K, chloroplastic (225 aa).

Residues Cys43, Cys44, Cys108, and Cys139 each contribute to the [4Fe-4S] cluster site.

It belongs to the complex I 20 kDa subunit family. NDH is composed of at least 16 different subunits, 5 of which are encoded in the nucleus. Requires [4Fe-4S] cluster as cofactor.

The protein resides in the plastid. It localises to the chloroplast thylakoid membrane. It carries out the reaction a plastoquinone + NADH + (n+1) H(+)(in) = a plastoquinol + NAD(+) + n H(+)(out). The enzyme catalyses a plastoquinone + NADPH + (n+1) H(+)(in) = a plastoquinol + NADP(+) + n H(+)(out). In terms of biological role, NDH shuttles electrons from NAD(P)H:plastoquinone, via FMN and iron-sulfur (Fe-S) centers, to quinones in the photosynthetic chain and possibly in a chloroplast respiratory chain. The immediate electron acceptor for the enzyme in this species is believed to be plastoquinone. Couples the redox reaction to proton translocation, and thus conserves the redox energy in a proton gradient. This chain is NAD(P)H-quinone oxidoreductase subunit K, chloroplastic, found in Daucus carota (Wild carrot).